Reading from the N-terminus, the 266-residue chain is Imidazole glycerol phosphate synthase subunit HisF (266 aa).

Residues D11 and D130 contribute to the active site.

Belongs to the HisA/HisF family. Heterodimer of HisH and HisF.

Its subcellular location is the cytoplasm. The catalysed reaction is 5-[(5-phospho-1-deoxy-D-ribulos-1-ylimino)methylamino]-1-(5-phospho-beta-D-ribosyl)imidazole-4-carboxamide + L-glutamine = D-erythro-1-(imidazol-4-yl)glycerol 3-phosphate + 5-amino-1-(5-phospho-beta-D-ribosyl)imidazole-4-carboxamide + L-glutamate + H(+). It participates in amino-acid biosynthesis; L-histidine biosynthesis; L-histidine from 5-phospho-alpha-D-ribose 1-diphosphate: step 5/9. IGPS catalyzes the conversion of PRFAR and glutamine to IGP, AICAR and glutamate. The HisF subunit catalyzes the cyclization activity that produces IGP and AICAR from PRFAR using the ammonia provided by the HisH subunit. In Verminephrobacter eiseniae (strain EF01-2), this protein is Imidazole glycerol phosphate synthase subunit HisF.